Consider the following 314-residue polypeptide: tRNA dimethylallyltransferase (314 aa).

Residues 1-25 (MAEEPQRSPAPTSPFAFTVPSNSLS) are disordered. Residue 40–47 (GPTASGKS) participates in ATP binding. Residue 42-47 (TASGKS) coordinates substrate.

It belongs to the IPP transferase family. In terms of assembly, monomer. Mg(2+) is required as a cofactor.

It carries out the reaction adenosine(37) in tRNA + dimethylallyl diphosphate = N(6)-dimethylallyladenosine(37) in tRNA + diphosphate. Its function is as follows. Catalyzes the transfer of a dimethylallyl group onto the adenine at position 37 in tRNAs that read codons beginning with uridine, leading to the formation of N6-(dimethylallyl)adenosine (i(6)A). The sequence is that of tRNA dimethylallyltransferase from Cereibacter sphaeroides (strain ATCC 17023 / DSM 158 / JCM 6121 / CCUG 31486 / LMG 2827 / NBRC 12203 / NCIMB 8253 / ATH 2.4.1.) (Rhodobacter sphaeroides).